We begin with the raw amino-acid sequence, 436 residues long: tRNA pseudouridine synthase Pus10 (436 aa).

Asp-254 acts as the Nucleophile in catalysis. Substrate-binding residues include Tyr-322 and Tyr-394.

Belongs to the pseudouridine synthase Pus10 family.

The enzyme catalyses uridine(54) in tRNA = pseudouridine(54) in tRNA. It catalyses the reaction uridine(55) in tRNA = pseudouridine(55) in tRNA. Responsible for synthesis of pseudouridine from uracil-54 and uracil-55 in the psi GC loop of transfer RNAs. The sequence is that of tRNA pseudouridine synthase Pus10 from Methanopyrus kandleri (strain AV19 / DSM 6324 / JCM 9639 / NBRC 100938).